The sequence spans 244 residues: Coenzyme Q-binding protein COQ10 homolog B, mitochondrial (244 aa).

This sequence belongs to the COQ10 family. As to quaternary structure, interacts with coenzyme Q.

The protein resides in the mitochondrion inner membrane. Required for the function of coenzyme Q in the respiratory chain. May serve as a chaperone or may be involved in the transport of Q6 from its site of synthesis to the catalytic sites of the respiratory complexes. The sequence is that of Coenzyme Q-binding protein COQ10 homolog B, mitochondrial (coq10b) from Xenopus laevis (African clawed frog).